The sequence spans 155 residues: Telokin-like protein 20 homolog (155 aa).

Residues Lys-109–Asp-155 are disordered.

The protein is Telokin-like protein 20 homolog of Orgyia pseudotsugata multicapsid polyhedrosis virus (OpMNPV).